Here is a 431-residue protein sequence, read N- to C-terminus: Serine--tRNA ligase (431 aa).

A disordered region spans residues 41–66 (QSRTQELQAERNARSKSIGEAARRGE). 240-242 (TSE) is an L-serine binding site. An ATP-binding site is contributed by 271 to 273 (RSE). Glu-294 is a binding site for L-serine. 358 to 361 (EISS) contributes to the ATP binding site. Ser-392 contributes to the L-serine binding site.

Belongs to the class-II aminoacyl-tRNA synthetase family. Type-1 seryl-tRNA synthetase subfamily. In terms of assembly, homodimer. The tRNA molecule binds across the dimer.

The protein localises to the cytoplasm. The catalysed reaction is tRNA(Ser) + L-serine + ATP = L-seryl-tRNA(Ser) + AMP + diphosphate + H(+). It carries out the reaction tRNA(Sec) + L-serine + ATP = L-seryl-tRNA(Sec) + AMP + diphosphate + H(+). The protein operates within aminoacyl-tRNA biosynthesis; selenocysteinyl-tRNA(Sec) biosynthesis; L-seryl-tRNA(Sec) from L-serine and tRNA(Sec): step 1/1. Its function is as follows. Catalyzes the attachment of serine to tRNA(Ser). Is also able to aminoacylate tRNA(Sec) with serine, to form the misacylated tRNA L-seryl-tRNA(Sec), which will be further converted into selenocysteinyl-tRNA(Sec). The polypeptide is Serine--tRNA ligase (Aeromonas salmonicida (strain A449)).